A 202-amino-acid chain; its full sequence is Protein-methionine-sulfoxide reductase heme-binding subunit MsrQ (202 aa).

Transmembrane regions (helical) follow at residues 8-28 (YAWL…FLLW), 50-70 (LALI…WLGW), 76-96 (IRKA…GIYL), 114-134 (PFIT…LTSG), 148-168 (LLHR…WWGV), and 174-194 (GPLL…KTPA).

It belongs to the MsrQ family. In terms of assembly, heterodimer of a catalytic subunit (MsrP) and a heme-binding subunit (MsrQ). It depends on FMN as a cofactor. Heme b is required as a cofactor.

Its subcellular location is the cell membrane. Its function is as follows. Part of the MsrPQ system that repairs oxidized cell envelope proteins containing methionine sulfoxide residues (Met-O), using respiratory chain electrons. Thus protects these proteins from oxidative-stress damage caused by reactive species of oxygen and chlorine. MsrPQ is essential for the maintenance of envelope integrity under bleach stress, rescuing a wide series of structurally unrelated cell envelope proteins from methionine oxidation. MsrQ provides electrons for reduction to the reductase catalytic subunit MsrP, using the quinone pool of the respiratory chain. The chain is Protein-methionine-sulfoxide reductase heme-binding subunit MsrQ from Deinococcus radiodurans (strain ATCC 13939 / DSM 20539 / JCM 16871 / CCUG 27074 / LMG 4051 / NBRC 15346 / NCIMB 9279 / VKM B-1422 / R1).